We begin with the raw amino-acid sequence, 117 residues long: Modulator protein MzrA (117 aa).

The Cytoplasmic portion of the chain corresponds to 1 to 11; that stretch reads MMTNRRFRKPS. The chain crosses the membrane as a helical span at residues 12–29; the sequence is AWRLLLLLLPLVVLLSMS. Topologically, residues 30–117 are periplasmic; it reads SRRLPDEVML…SNGTSPVTRS (88 aa).

It belongs to the MzrA family. As to quaternary structure, interacts with EnvZ.

It is found in the cell inner membrane. Functionally, modulates the activity of the EnvZ/OmpR two-component regulatory system, probably by directly modulating EnvZ enzymatic activity and increasing stability of phosphorylated OmpR. This chain is Modulator protein MzrA, found in Dickeya dadantii (strain 3937) (Erwinia chrysanthemi (strain 3937)).